A 297-amino-acid polypeptide reads, in one-letter code: Bifunctional protein FolD (297 aa).

NADP(+)-binding positions include 169-171 (GRS), S196, and I237.

It belongs to the tetrahydrofolate dehydrogenase/cyclohydrolase family. As to quaternary structure, homodimer.

It carries out the reaction (6R)-5,10-methylene-5,6,7,8-tetrahydrofolate + NADP(+) = (6R)-5,10-methenyltetrahydrofolate + NADPH. The catalysed reaction is (6R)-5,10-methenyltetrahydrofolate + H2O = (6R)-10-formyltetrahydrofolate + H(+). It functions in the pathway one-carbon metabolism; tetrahydrofolate interconversion. Its function is as follows. Catalyzes the oxidation of 5,10-methylenetetrahydrofolate to 5,10-methenyltetrahydrofolate and then the hydrolysis of 5,10-methenyltetrahydrofolate to 10-formyltetrahydrofolate. The protein is Bifunctional protein FolD of Salinibacter ruber (strain DSM 13855 / M31).